The primary structure comprises 210 residues: Cytochrome c biogenesis ATP-binding export protein CcmA (210 aa).

Residues 4–208 form the ABC transporter domain; that stretch reads VPTLSFSKLG…GAIPAQLLEL (205 aa). 39–46 contributes to the ATP binding site; it reads GANGVGKT.

The protein belongs to the ABC transporter superfamily. CcmA exporter (TC 3.A.1.107) family. The complex is composed of two ATP-binding proteins (CcmA) and two transmembrane proteins (CcmB).

It is found in the cell inner membrane. The enzyme catalyses heme b(in) + ATP + H2O = heme b(out) + ADP + phosphate + H(+). Functionally, part of the ABC transporter complex CcmAB involved in the biogenesis of c-type cytochromes; once thought to export heme, this seems not to be the case, but its exact role is uncertain. Responsible for energy coupling to the transport system. This is Cytochrome c biogenesis ATP-binding export protein CcmA from Albidiferax ferrireducens (strain ATCC BAA-621 / DSM 15236 / T118) (Rhodoferax ferrireducens).